Consider the following 623-residue polypeptide: Aspartate--tRNA(Asp/Asn) ligase (623 aa).

Glu175 lines the L-aspartate pocket. Residues 199–202 are aspartate; sequence QQFK. The L-aspartate site is built by Arg221 and His455. Residue 221 to 223 participates in ATP binding; sequence RDE. Glu517 provides a ligand contact to ATP. An L-aspartate-binding site is contributed by Arg524. 569-572 serves as a coordination point for ATP; the sequence is GVDR.

The protein belongs to the class-II aminoacyl-tRNA synthetase family. Type 1 subfamily. In terms of assembly, homodimer.

Its subcellular location is the cytoplasm. The catalysed reaction is tRNA(Asx) + L-aspartate + ATP = L-aspartyl-tRNA(Asx) + AMP + diphosphate. Aspartyl-tRNA synthetase with relaxed tRNA specificity since it is able to aspartylate not only its cognate tRNA(Asp) but also tRNA(Asn). Reaction proceeds in two steps: L-aspartate is first activated by ATP to form Asp-AMP and then transferred to the acceptor end of tRNA(Asp/Asn). This is Aspartate--tRNA(Asp/Asn) ligase from Methylocella silvestris (strain DSM 15510 / CIP 108128 / LMG 27833 / NCIMB 13906 / BL2).